A 332-amino-acid polypeptide reads, in one-letter code: Geranylgeranyl pyrophosphate synthase 2 (332 aa).

Isopentenyl diphosphate is bound by residues Lys55, Arg58, and His87. Mg(2+) is bound by residues Asp94 and Asp98. Residue Arg103 coordinates dimethylallyl diphosphate. Arg104 provides a ligand contact to isopentenyl diphosphate. 3 residues coordinate dimethylallyl diphosphate: Lys181, Thr182, and Gln218. Asp221 serves as a coordination point for Mg(2+). 3 residues coordinate dimethylallyl diphosphate: Asn225, Lys235, and Lys245.

It belongs to the FPP/GGPP synthase family. It depends on Mg(2+) as a cofactor.

The catalysed reaction is isopentenyl diphosphate + dimethylallyl diphosphate = (2E)-geranyl diphosphate + diphosphate. It carries out the reaction isopentenyl diphosphate + (2E)-geranyl diphosphate = (2E,6E)-farnesyl diphosphate + diphosphate. It catalyses the reaction isopentenyl diphosphate + (2E,6E)-farnesyl diphosphate = (2E,6E,10E)-geranylgeranyl diphosphate + diphosphate. In terms of biological role, geranylgeranyl pyrophosphate synthase; part of the gene cluster 3 that mediates the biosynthesis of an isoprenoid secondary metabolite. This Zymoseptoria tritici (strain CBS 115943 / IPO323) (Speckled leaf blotch fungus) protein is Geranylgeranyl pyrophosphate synthase 2 (GGS2).